The following is a 299-amino-acid chain: Tricarboxylate transport protein (299 aa).

Solcar repeat units follow at residues 10–97 (VDPL…IKDM), 109–199 (TRGV…IKTL), and 212–297 (LSSG…VLVM). The next 6 helical transmembrane spans lie at 16–36 (FLAG…FEFA), 66–86 (IGSI…KAGI), 113–133 (IAGL…FEAI), 174–193 (GVLP…LGCY), 215–235 (GLTF…TMPL), and 272–291 (GATP…FTIY).

This sequence belongs to the mitochondrial carrier (TC 2.A.29) family.

It localises to the mitochondrion inner membrane. Transport of citrate across inner mitochondrial membrane. The protein is Tricarboxylate transport protein (CTP1) of Saccharomyces cerevisiae (strain ATCC 204508 / S288c) (Baker's yeast).